Here is a 340-residue protein sequence, read N- to C-terminus: S-adenosylmethionine:tRNA ribosyltransferase-isomerase (340 aa).

The protein belongs to the QueA family. In terms of assembly, monomer.

The protein resides in the cytoplasm. It catalyses the reaction 7-aminomethyl-7-carbaguanosine(34) in tRNA + S-adenosyl-L-methionine = epoxyqueuosine(34) in tRNA + adenine + L-methionine + 2 H(+). It functions in the pathway tRNA modification; tRNA-queuosine biosynthesis. Functionally, transfers and isomerizes the ribose moiety from AdoMet to the 7-aminomethyl group of 7-deazaguanine (preQ1-tRNA) to give epoxyqueuosine (oQ-tRNA). This Aliarcobacter butzleri (strain RM4018) (Arcobacter butzleri) protein is S-adenosylmethionine:tRNA ribosyltransferase-isomerase.